The following is a 350-amino-acid chain: 2-oxoglutarate and iron-dependent oxygenase domain-containing protein 2 (350 aa).

The 95-residue stretch at 215-309 (DSHRAFVVKY…RWNLVVWLRA (95 aa)) folds into the Fe2OG dioxygenase domain. His235, Asp237, and His290 together coordinate Fe cation. Arg300 contacts 2-oxoglutarate.

It belongs to the OGFOD2 family. It depends on Fe(2+) as a cofactor. Requires L-ascorbate as cofactor.

This is 2-oxoglutarate and iron-dependent oxygenase domain-containing protein 2 (OGFOD2) from Homo sapiens (Human).